The sequence spans 360 residues: Teichoic acids export ATP-binding protein TagH (360 aa).

An ABC transporter domain is found at 24–245 (LKAMFFPKTR…YEDYINWFNK (222 aa)). Residue 59–66 (GINGSGKS) participates in ATP binding. The tract at residues 246-360 (LSKEEKEAHK…GDIDNSDVSL (115 aa)) is unknown. A disordered region spans residues 270 to 290 (EEQENGKAGSGGDGTQPIVQP).

Belongs to the ABC transporter superfamily. Teichoic acids exporter (TC 3.A.1.104.1) family. In terms of assembly, the complex is composed of two ATP-binding proteins (TagH) and two transmembrane proteins (TagG).

The protein localises to the cell membrane. It catalyses the reaction ATP + H2O + teichoic acidSide 1 = ADP + phosphate + teichoic acidSide 2.. Part of the ABC transporter complex TagGH involved in teichoic acids export. Responsible for energy coupling to the transport system. The polypeptide is Teichoic acids export ATP-binding protein TagH (Shouchella clausii (strain KSM-K16) (Alkalihalobacillus clausii)).